The sequence spans 829 residues: uncharacterized protein (829 aa).

This sequence belongs to the IIV-6 050L family.

This is an uncharacterized protein from Invertebrate iridescent virus 3 (IIV-3).